Reading from the N-terminus, the 184-residue chain is Shikimate kinase (184 aa).

17–22 (GAGKTT) is a binding site for ATP. Residue T21 participates in Mg(2+) binding. Substrate contacts are provided by D39, R63, and G85. ATP is bound at residue R123. A substrate-binding site is contributed by R142.

Belongs to the shikimate kinase family. Monomer. Mg(2+) is required as a cofactor.

Its subcellular location is the cytoplasm. The enzyme catalyses shikimate + ATP = 3-phosphoshikimate + ADP + H(+). The protein operates within metabolic intermediate biosynthesis; chorismate biosynthesis; chorismate from D-erythrose 4-phosphate and phosphoenolpyruvate: step 5/7. Its function is as follows. Catalyzes the specific phosphorylation of the 3-hydroxyl group of shikimic acid using ATP as a cosubstrate. The protein is Shikimate kinase of Burkholderia pseudomallei (strain 1710b).